The primary structure comprises 300 residues: Probable membrane transporter protein YtnM (300 aa).

The next 8 membrane-spanning stretches (helical) occupy residues 4-24 (LIVF…LGMA), 33-53 (LLAF…AEVV), 76-96 (LVIP…QLPG), 102-122 (YISL…LFQY), 139-159 (IPLG…WGPV), 206-226 (LWVF…AWLV), 231-251 (PQLM…RTLI), and 260-280 (VHPL…LFVL).

Belongs to the 4-toluene sulfonate uptake permease (TSUP) (TC 2.A.102) family.

The protein localises to the cell membrane. The polypeptide is Probable membrane transporter protein YtnM (ytnM) (Bacillus subtilis (strain 168)).